The following is a 62-amino-acid chain: DNA-directed RNA polymerase subunit omega (62 aa).

This sequence belongs to the RNA polymerase subunit omega family. The RNAP catalytic core consists of 2 alpha, 1 beta, 1 beta' and 1 omega subunit. When a sigma factor is associated with the core the holoenzyme is formed, which can initiate transcription.

The catalysed reaction is RNA(n) + a ribonucleoside 5'-triphosphate = RNA(n+1) + diphosphate. Promotes RNA polymerase assembly. Latches the N- and C-terminal regions of the beta' subunit thereby facilitating its interaction with the beta and alpha subunits. The polypeptide is DNA-directed RNA polymerase subunit omega (Wigglesworthia glossinidia brevipalpis).